A 570-amino-acid chain; its full sequence is Sulfite reductase [NADPH] hemoprotein beta-component (570 aa).

Cysteine 434, cysteine 440, cysteine 479, and cysteine 483 together coordinate [4Fe-4S] cluster. Cysteine 483 serves as a coordination point for siroheme.

It belongs to the nitrite and sulfite reductase 4Fe-4S domain family. In terms of assembly, alpha(8)-beta(8). The alpha component is a flavoprotein, the beta component is a hemoprotein. Requires siroheme as cofactor. It depends on [4Fe-4S] cluster as a cofactor.

It carries out the reaction hydrogen sulfide + 3 NADP(+) + 3 H2O = sulfite + 3 NADPH + 4 H(+). The protein operates within sulfur metabolism; hydrogen sulfide biosynthesis; hydrogen sulfide from sulfite (NADPH route): step 1/1. Its function is as follows. Component of the sulfite reductase complex that catalyzes the 6-electron reduction of sulfite to sulfide. This is one of several activities required for the biosynthesis of L-cysteine from sulfate. This chain is Sulfite reductase [NADPH] hemoprotein beta-component, found in Salmonella typhi.